A 145-amino-acid chain; its full sequence is Hemoglobin fetal subunit beta (145 aa).

Positions 1 to 145 (MLSAEEKAAV…VANALAHRYH (145 aa)) constitute a Globin domain. Heme b-binding residues include H62 and H91.

The protein belongs to the globin family. As to quaternary structure, heterotetramer of two alpha chains and two beta chains. As to expression, red blood cells.

Its function is as follows. Involved in oxygen transport from the lung to the various peripheral tissues. This Bos taurus (Bovine) protein is Hemoglobin fetal subunit beta.